A 316-amino-acid chain; its full sequence is PAK4-inhibitor inka1 (316 aa).

The tract at residues 108 to 130 (YSEVSGSSLRGEEDDIVEEESET) is disordered. The span at 119–128 (EEDDIVEEES) shows a compositional bias: acidic residues. Inka box regions lie at residues 182 to 219 (DSQD…DLPE) and 289 to 316 (SDIA…AGFL).

It belongs to the INKA family. In terms of assembly, interacts with pak4/pak5.

Its subcellular location is the nucleus. It localises to the cytoplasm. Inhibitor of the serine/threonine-protein kinase pak4/pak5. Acts by binding pak4/pak5 in a substrate-like manner, inhibiting the protein kinase activity. Required for the proper migration of neural crest cells during embryonic development, probably by inhibiting pak4/pak5. The chain is PAK4-inhibitor inka1 from Xenopus laevis (African clawed frog).